The sequence spans 306 residues: Probable rRNA-processing protein EBP2 (306 aa).

The residue at position 1 (Met1) is an N-acetylmethionine. 2 disordered regions span residues 1 to 20 (MDTP…LVTD) and 77 to 99 (VPEI…VDPE). Phosphothreonine is present on Thr3. 5 positions are modified to phosphoserine: Ser7, Ser9, Ser11, Ser13, and Ser16. Lys94 participates in a covalent cross-link: Glycyl lysine isopeptide (Lys-Gly) (interchain with G-Cter in SUMO2). Positions 138 to 169 (AEMAKSDLQMQKIRQKLQTKQAAMERSEKAKQ) form a coiled coil. Glycyl lysine isopeptide (Lys-Gly) (interchain with G-Cter in SUMO2) cross-links involve residues Lys179 and Lys218. A disordered region spans residues 213–306 (LEGDQKPLAQ…TREKMKNRTH (94 aa)). Ser264 and Ser270 each carry phosphoserine. A compositionally biased stretch (basic residues) spans 274 to 306 (KTAHGRGLKRPGKKGSNKRPGKRTREKMKNRTH).

This sequence belongs to the EBP2 family. Specifically interacts with EBV EBNA1. The EBNA1-EBP2 interaction is important for the stable segregation of EBV episomes during cell division. Interacts with WDR46. In terms of tissue distribution, ubiquitous.

Its subcellular location is the nucleus. It is found in the nucleolus. Functionally, required for the processing of the 27S pre-rRNA. This Homo sapiens (Human) protein is Probable rRNA-processing protein EBP2 (EBNA1BP2).